The primary structure comprises 238 residues: MSTSNGSANGTNGVGLPRGDEPEIIAVRRGMFGNRDTGDTSGYGRLVRPVALPGSTPRPYGGYFDAVMDRLAEVLGEERYAMSIERVVVYRDQLTIEVSRVQLPAVASVLRDDPDLRFELCLGVSGVHYPEDTGRELHAVYPLMSITHNRRIQLEVAAPDADPHIPSLYAVYPTTDWHERETYDFFGIIFDGHPSLTRIEMPDDWEGHPQRKDYPLGGIPVEYHGAQIPPPDQRRSYS.

The segment covering 1-11 (MSTSNGSANGT) has biased composition (polar residues). Positions 1–20 (MSTSNGSANGTNGVGLPRGD) are disordered.

This sequence belongs to the complex I 30 kDa subunit family. NDH-1 is composed of 14 different subunits. Subunits NuoB, C, D, E, F, and G constitute the peripheral sector of the complex.

It localises to the cell membrane. It catalyses the reaction a quinone + NADH + 5 H(+)(in) = a quinol + NAD(+) + 4 H(+)(out). Its function is as follows. NDH-1 shuttles electrons from NADH, via FMN and iron-sulfur (Fe-S) centers, to quinones in the respiratory chain. The immediate electron acceptor for the enzyme in this species is believed to be a menaquinone. Couples the redox reaction to proton translocation (for every two electrons transferred, four hydrogen ions are translocated across the cytoplasmic membrane), and thus conserves the redox energy in a proton gradient. The protein is NADH-quinone oxidoreductase subunit C of Mycolicibacterium smegmatis (strain ATCC 700084 / mc(2)155) (Mycobacterium smegmatis).